A 428-amino-acid polypeptide reads, in one-letter code: Adenylosuccinate synthetase (428 aa).

GTP-binding positions include 12 to 18 (GDEGKGK) and 40 to 42 (GHT). The Proton acceptor role is filled by aspartate 13. Mg(2+)-binding residues include aspartate 13 and glycine 40. IMP-binding positions include 13–16 (DEGK), 38–41 (NAGH), threonine 128, arginine 142, glutamine 223, threonine 238, and arginine 302. Histidine 41 (proton donor) is an active-site residue. Residue 298–304 (VTTGRPR) coordinates substrate. GTP is bound by residues arginine 304, 330-332 (KLD), and 412-414 (GTG).

Belongs to the adenylosuccinate synthetase family. As to quaternary structure, homodimer. Mg(2+) is required as a cofactor.

The protein localises to the cytoplasm. The enzyme catalyses IMP + L-aspartate + GTP = N(6)-(1,2-dicarboxyethyl)-AMP + GDP + phosphate + 2 H(+). It functions in the pathway purine metabolism; AMP biosynthesis via de novo pathway; AMP from IMP: step 1/2. Its function is as follows. Plays an important role in the de novo pathway of purine nucleotide biosynthesis. Catalyzes the first committed step in the biosynthesis of AMP from IMP. This chain is Adenylosuccinate synthetase, found in Bifidobacterium animalis subsp. lactis (strain AD011).